Here is a 424-residue protein sequence, read N- to C-terminus: Glutamate-1-semialdehyde 2,1-aminomutase (424 aa).

Position 263 is an N6-(pyridoxal phosphate)lysine (K263).

It belongs to the class-III pyridoxal-phosphate-dependent aminotransferase family. HemL subfamily. In terms of assembly, homodimer. Pyridoxal 5'-phosphate serves as cofactor.

It localises to the cytoplasm. It catalyses the reaction (S)-4-amino-5-oxopentanoate = 5-aminolevulinate. Its pathway is porphyrin-containing compound metabolism; protoporphyrin-IX biosynthesis; 5-aminolevulinate from L-glutamyl-tRNA(Glu): step 2/2. The polypeptide is Glutamate-1-semialdehyde 2,1-aminomutase (Campylobacter jejuni (strain RM1221)).